We begin with the raw amino-acid sequence, 136 residues long: Probable disulfide formation protein (136 aa).

A helical membrane pass occupies residues 7–26; the sequence is SYALYFAWAISCAGTLISIF. C36 and C39 are disulfide-bonded. 2 helical membrane passes run 41–60 and 67–84; these read YQRI…AYRE and YILP…YQVF. Cysteines 96 and 101 form a disulfide. The chain crosses the membrane as a helical span at residues 109-131; it reads SYVTIPMASVVAFGAIVCLLVLT.

Belongs to the DsbB family. BdbC subfamily.

It is found in the cell inner membrane. Its function is as follows. Required for disulfide bond formation in some proteins. The polypeptide is Probable disulfide formation protein (Chlamydia pneumoniae (Chlamydophila pneumoniae)).